The primary structure comprises 196 residues: Serine/arginine-rich splicing factor RSZ22A (196 aa).

The 70-residue stretch at 2-71 (SRVYVGNLDP…NGWRVEQSHN (70 aa)) folds into the RRM domain. Phosphoserine is present on serine 48. Residues 58 to 70 (VDGKNGWRVEQSH) show a composition bias toward basic and acidic residues. The disordered stretch occupies residues 58–196 (VDGKNGWRVE…GLKDVRRSRS (139 aa)). The span at 72–87 (RGGGGGRGGGRGGGDG) shows a compositional bias: gly residues. Over residues 88–100 (GRGRGGSDLKCYE) the composition is skewed to basic and acidic residues. Residues 96–113 (LKCYECGESGHFARECRS) form a CCHC-type zinc finger. Residues 119 to 135 (GRRRSRSRSRSPPRYRK) show a composition bias toward basic residues. Residues serine 136, serine 144, serine 146, serine 151, serine 159, serine 170, and serine 196 each carry the phosphoserine modification. Residues 139–149 (YGGRRSYSPRA) are compositionally biased toward low complexity.

The protein belongs to the splicing factor SR family. RSZ subfamily. In terms of assembly, component of the spliceosome. Post-translationally, extensively phosphorylated on serine residues in the RS domain.

It localises to the nucleus. In terms of biological role, probably involved in intron recognition and spliceosome assembly. The sequence is that of Serine/arginine-rich splicing factor RSZ22A (RSZ22A) from Arabidopsis thaliana (Mouse-ear cress).